The following is a 225-amino-acid chain: Uracil-DNA glycosylase (225 aa).

Residue D65 is the Proton acceptor of the active site.

This sequence belongs to the uracil-DNA glycosylase (UDG) superfamily. UNG family.

It localises to the cytoplasm. It catalyses the reaction Hydrolyzes single-stranded DNA or mismatched double-stranded DNA and polynucleotides, releasing free uracil.. In terms of biological role, excises uracil residues from the DNA which can arise as a result of misincorporation of dUMP residues by DNA polymerase or due to deamination of cytosine. This is Uracil-DNA glycosylase from Alkaliphilus oremlandii (strain OhILAs) (Clostridium oremlandii (strain OhILAs)).